The chain runs to 357 residues: Alanine racemase (357 aa).

Residue Lys-35 is the Proton acceptor; specific for D-alanine of the active site. An N6-(pyridoxal phosphate)lysine modification is found at Lys-35. Position 131 (Arg-131) interacts with substrate. Residue Tyr-256 is the Proton acceptor; specific for L-alanine of the active site. A substrate-binding site is contributed by Met-304.

The protein belongs to the alanine racemase family. Pyridoxal 5'-phosphate is required as a cofactor.

The enzyme catalyses L-alanine = D-alanine. Its pathway is amino-acid biosynthesis; D-alanine biosynthesis; D-alanine from L-alanine: step 1/1. In terms of biological role, catalyzes the interconversion of L-alanine and D-alanine. May also act on other amino acids. In Legionella pneumophila (strain Paris), this protein is Alanine racemase (alr).